Here is a 574-residue protein sequence, read N- to C-terminus: Septation ring formation regulator EzrA (574 aa).

Over 1–7 the chain is Extracellular; sequence MSSGIIL. The helical transmembrane segment at 8–26 threads the bilayer; it reads LIVAIVLLVIIAYLIGVII. Residues 27–574 are Cytoplasmic-facing; sequence RKRNDSMIGT…YERTREHIRF (548 aa). 3 coiled-coil regions span residues 102 to 140, 243 to 379, and 459 to 520; these read NFIRAKHEINNVESQLNLVEEDITSIREALSILKEQEEK, RRLL…GQEI, and QLEA…SFEA.

This sequence belongs to the EzrA family.

The protein localises to the cell membrane. Functionally, negative regulator of FtsZ ring formation; modulates the frequency and position of FtsZ ring formation. Inhibits FtsZ ring formation at polar sites. Interacts either with FtsZ or with one of its binding partners to promote depolymerization. This is Septation ring formation regulator EzrA from Streptococcus uberis (strain ATCC BAA-854 / 0140J).